The following is a 223-amino-acid chain: Glutathione S-transferase A2 (223 aa).

Alanine 2 is subject to N-acetylalanine. A GST N-terminal domain is found at 3–83; it reads GKPKLHYFNG…YIATKYNLYG (81 aa). N6-succinyllysine is present on lysine 4. Residues tyrosine 9, arginine 45, 54–55, and 67–68 each bind glutathione; these read QV and QT. The GST C-terminal domain maps to 85–208; the sequence is DMKERALIDM…QPGSQRKPPM (124 aa).

It belongs to the GST superfamily. Alpha family. Homodimer. Expressed in corpus luteum, adrenal gland, testis, liver, lung, thyroid and kidney.

Its subcellular location is the cytoplasm. It catalyses the reaction RX + glutathione = an S-substituted glutathione + a halide anion + H(+). Conjugation of reduced glutathione to a wide number of exogenous and endogenous hydrophobic electrophiles. This chain is Glutathione S-transferase A2 (GSTA2), found in Bos taurus (Bovine).